Consider the following 71-residue polypeptide: Translational regulator CsrA (71 aa).

The interval 50–71 is disordered; that stretch reads RIRHEKDGDVPEAAPGQGADPQ.

This sequence belongs to the CsrA/RsmA family. As to quaternary structure, homodimer; the beta-strands of each monomer intercalate to form a hydrophobic core, while the alpha-helices form wings that extend away from the core.

It is found in the cytoplasm. A key translational regulator that binds mRNA to regulate translation initiation and/or mRNA stability. Mediates global changes in gene expression, shifting from rapid growth to stress survival by linking envelope stress, the stringent response and the catabolite repression systems. Usually binds in the 5'-UTR; binding at or near the Shine-Dalgarno sequence prevents ribosome-binding, repressing translation, binding elsewhere in the 5'-UTR can activate translation and/or stabilize the mRNA. Its function is antagonized by small RNA(s). The polypeptide is Translational regulator CsrA (Halorhodospira halophila (strain DSM 244 / SL1) (Ectothiorhodospira halophila (strain DSM 244 / SL1))).